The chain runs to 103 residues: Co-chaperonin GroES (103 aa).

The protein belongs to the GroES chaperonin family. Heptamer of 7 subunits arranged in a ring. Interacts with the chaperonin GroEL.

It localises to the cytoplasm. Together with the chaperonin GroEL, plays an essential role in assisting protein folding. The GroEL-GroES system forms a nano-cage that allows encapsulation of the non-native substrate proteins and provides a physical environment optimized to promote and accelerate protein folding. GroES binds to the apical surface of the GroEL ring, thereby capping the opening of the GroEL channel. This is Co-chaperonin GroES from Synechococcus sp. (strain JA-3-3Ab) (Cyanobacteria bacterium Yellowstone A-Prime).